The chain runs to 228 residues: MRKGEVLKLGIVPYMEGKEIQLKAFERVKKGETDGILILLQHPPVYTIGVSGGFDENILVPLAELKKKAELYKVERGGKITFHGPGQIVAYPIFNLAKWQKDVHLFVYKLEETIIKLLEEYGIKAGRKPKYTGVWVGDEKICAIGIAVRRWITWHGIAFNVNTDLSYFGLINACGITEFGVTSMQKLGINEDIEKVKEKMVDKFSEVFGIHFNEITLDRLAVIDNAKA.

One can recognise a BPL/LPL catalytic domain in the interval 31–212 (GETDGILILL…KFSEVFGIHF (182 aa)). Substrate is bound by residues 76-83 (RGGKITFH), 143-145 (AIG), and 156-158 (GIA). Cysteine 174 functions as the Acyl-thioester intermediate in the catalytic mechanism.

It belongs to the LipB family.

It is found in the cytoplasm. It catalyses the reaction octanoyl-[ACP] + L-lysyl-[protein] = N(6)-octanoyl-L-lysyl-[protein] + holo-[ACP] + H(+). It participates in protein modification; protein lipoylation via endogenous pathway; protein N(6)-(lipoyl)lysine from octanoyl-[acyl-carrier-protein]: step 1/2. Its function is as follows. Catalyzes the transfer of endogenously produced octanoic acid from octanoyl-acyl-carrier-protein onto the lipoyl domains of lipoate-dependent enzymes. Lipoyl-ACP can also act as a substrate although octanoyl-ACP is likely to be the physiological substrate. This Thermoanaerobacter pseudethanolicus (strain ATCC 33223 / 39E) (Clostridium thermohydrosulfuricum) protein is Octanoyltransferase.